A 207-amino-acid chain; its full sequence is Small ribosomal subunit protein uS4 (207 aa).

Residues 31–56 (KCKLDSKPGQHGRTSGARTSDYGNQL) are disordered. The span at 42–53 (GRTSGARTSDYG) shows a compositional bias: polar residues. The S4 RNA-binding domain maps to 97 to 157 (ARLDNVVYRM…EKSKKQVRIV (61 aa)).

This sequence belongs to the universal ribosomal protein uS4 family. Part of the 30S ribosomal subunit. Contacts protein S5. The interaction surface between S4 and S5 is involved in control of translational fidelity.

One of the primary rRNA binding proteins, it binds directly to 16S rRNA where it nucleates assembly of the body of the 30S subunit. In terms of biological role, with S5 and S12 plays an important role in translational accuracy. The polypeptide is Small ribosomal subunit protein uS4 (Janthinobacterium sp. (strain Marseille) (Minibacterium massiliensis)).